Consider the following 362-residue polypeptide: UDP-N-acetylglucosamine--N-acetylmuramyl-(pentapeptide) pyrophosphoryl-undecaprenol N-acetylglucosamine transferase (362 aa).

UDP-N-acetyl-alpha-D-glucosamine-binding positions include 10 to 12, Asn-124, Ser-194, Ile-249, and Gln-294; that span reads TGG.

The protein belongs to the glycosyltransferase 28 family. MurG subfamily.

The protein localises to the cell membrane. The catalysed reaction is Mur2Ac(oyl-L-Ala-gamma-D-Glu-L-Lys-D-Ala-D-Ala)-di-trans,octa-cis-undecaprenyl diphosphate + UDP-N-acetyl-alpha-D-glucosamine = beta-D-GlcNAc-(1-&gt;4)-Mur2Ac(oyl-L-Ala-gamma-D-Glu-L-Lys-D-Ala-D-Ala)-di-trans,octa-cis-undecaprenyl diphosphate + UDP + H(+). The protein operates within cell wall biogenesis; peptidoglycan biosynthesis. In terms of biological role, cell wall formation. Catalyzes the transfer of a GlcNAc subunit on undecaprenyl-pyrophosphoryl-MurNAc-pentapeptide (lipid intermediate I) to form undecaprenyl-pyrophosphoryl-MurNAc-(pentapeptide)GlcNAc (lipid intermediate II). This is UDP-N-acetylglucosamine--N-acetylmuramyl-(pentapeptide) pyrophosphoryl-undecaprenol N-acetylglucosamine transferase from Pediococcus pentosaceus (strain ATCC 25745 / CCUG 21536 / LMG 10740 / 183-1w).